Consider the following 132-residue polypeptide: Small ribosomal subunit protein uS8 (132 aa).

This sequence belongs to the universal ribosomal protein uS8 family. Part of the 30S ribosomal subunit. Contacts proteins S5 and S12.

One of the primary rRNA binding proteins, it binds directly to 16S rRNA central domain where it helps coordinate assembly of the platform of the 30S subunit. The polypeptide is Small ribosomal subunit protein uS8 (Streptomyces coelicolor (strain ATCC BAA-471 / A3(2) / M145)).